The chain runs to 525 residues: GMP synthase [glutamine-hydrolyzing] (525 aa).

The Glutamine amidotransferase type-1 domain maps to 11-200; it reads PVLVVDFGAQ…LTEIAGLEQN (190 aa). Cys-88 (nucleophile) is an active-site residue. Residues His-174 and Glu-176 contribute to the active site. The region spanning 201 to 399 is the GMPS ATP-PPase domain; it reads WTAANIAEEL…LGLPEEIVNR (199 aa). 229–235 is a binding site for ATP; the sequence is SGGVDSA.

Homodimer.

It catalyses the reaction XMP + L-glutamine + ATP + H2O = GMP + L-glutamate + AMP + diphosphate + 2 H(+). It participates in purine metabolism; GMP biosynthesis; GMP from XMP (L-Gln route): step 1/1. In terms of biological role, catalyzes the synthesis of GMP from XMP. This is GMP synthase [glutamine-hydrolyzing] from Corynebacterium diphtheriae (strain ATCC 700971 / NCTC 13129 / Biotype gravis).